A 202-amino-acid chain; its full sequence is Glycerol-3-phosphate acyltransferase (202 aa).

5 helical membrane-spanning segments follow: residues 3 to 23, 87 to 107, 118 to 138, 144 to 164, and 167 to 187; these read NLIIYAFIYLLSSIPFGLILA, LLWSVAVLAILGHCFSIYLLF, GAMIVLLPLEVLTAFIVWVVI, ISSLASLAALLAFVVSSFIFN, and LEIHTHAPVFIIAFIIVYKHL.

Belongs to the PlsY family. In terms of assembly, probably interacts with PlsX.

The protein resides in the cell inner membrane. It catalyses the reaction an acyl phosphate + sn-glycerol 3-phosphate = a 1-acyl-sn-glycero-3-phosphate + phosphate. The protein operates within lipid metabolism; phospholipid metabolism. Its function is as follows. Catalyzes the transfer of an acyl group from acyl-phosphate (acyl-PO(4)) to glycerol-3-phosphate (G3P) to form lysophosphatidic acid (LPA). This enzyme utilizes acyl-phosphate as fatty acyl donor, but not acyl-CoA or acyl-ACP. This chain is Glycerol-3-phosphate acyltransferase, found in Campylobacter jejuni (strain RM1221).